The following is a 270-amino-acid chain: S-adenosylmethionine decarboxylase proenzyme (270 aa).

The active-site Schiff-base intermediate with substrate; via pyruvic acid is serine 117. A Pyruvic acid (Ser); by autocatalysis modification is found at serine 117. Catalysis depends on histidine 122, which acts as the Proton acceptor; for processing activity. Cysteine 145 serves as the catalytic Proton donor; for catalytic activity.

This sequence belongs to the prokaryotic AdoMetDC family. Type 2 subfamily. In terms of assembly, heterooctamer of four alpha and four beta chains arranged as a tetramer of alpha/beta heterodimers. Pyruvate serves as cofactor. Post-translationally, is synthesized initially as an inactive proenzyme. Formation of the active enzyme involves a self-maturation process in which the active site pyruvoyl group is generated from an internal serine residue via an autocatalytic post-translational modification. Two non-identical subunits are generated from the proenzyme in this reaction, and the pyruvate is formed at the N-terminus of the alpha chain, which is derived from the carboxyl end of the proenzyme. The post-translation cleavage follows an unusual pathway, termed non-hydrolytic serinolysis, in which the side chain hydroxyl group of the serine supplies its oxygen atom to form the C-terminus of the beta chain, while the remainder of the serine residue undergoes an oxidative deamination to produce ammonia and the pyruvoyl group blocking the N-terminus of the alpha chain.

It carries out the reaction S-adenosyl-L-methionine + H(+) = S-adenosyl 3-(methylsulfanyl)propylamine + CO2. It participates in amine and polyamine biosynthesis; S-adenosylmethioninamine biosynthesis; S-adenosylmethioninamine from S-adenosyl-L-methionine: step 1/1. Catalyzes the decarboxylation of S-adenosylmethionine to S-adenosylmethioninamine (dcAdoMet), the propylamine donor required for the synthesis of the polyamines spermine and spermidine from the diamine putrescine. This is S-adenosylmethionine decarboxylase proenzyme from Pseudoalteromonas translucida (strain TAC 125).